Here is a 157-residue protein sequence, read N- to C-terminus: Arginine repressor (157 aa).

Belongs to the ArgR family.

It localises to the cytoplasm. Its pathway is amino-acid biosynthesis; L-arginine biosynthesis [regulation]. Functionally, regulates arginine biosynthesis genes. This chain is Arginine repressor, found in Bacteroides fragilis (strain ATCC 25285 / DSM 2151 / CCUG 4856 / JCM 11019 / LMG 10263 / NCTC 9343 / Onslow / VPI 2553 / EN-2).